The following is a 185-amino-acid chain: Elongation factor P (185 aa).

Belongs to the elongation factor P family.

The protein localises to the cytoplasm. It functions in the pathway protein biosynthesis; polypeptide chain elongation. Functionally, involved in peptide bond synthesis. Stimulates efficient translation and peptide-bond synthesis on native or reconstituted 70S ribosomes in vitro. Probably functions indirectly by altering the affinity of the ribosome for aminoacyl-tRNA, thus increasing their reactivity as acceptors for peptidyl transferase. The chain is Elongation factor P from Limosilactobacillus reuteri (strain DSM 20016) (Lactobacillus reuteri).